We begin with the raw amino-acid sequence, 188 residues long: Putative manganese efflux pump MntP (188 aa).

6 helical membrane-spanning segments follow: residues 3-23 (ISAT…ASIG), 41-61 (LIFG…GMLA), 62-82 (SQFI…FLGG), 106-128 (WILV…GLAF), 143-163 (ATLI…PLLG), and 168-188 (ILGG…HFAG).

Belongs to the MntP (TC 9.B.29) family.

It localises to the cell inner membrane. In terms of biological role, probably functions as a manganese efflux pump. This Enterobacter sp. (strain 638) protein is Putative manganese efflux pump MntP.